The sequence spans 453 residues: Probable exopolygalacturonase B (453 aa).

The first 16 residues, methionine 1–serine 16, serve as a signal peptide directing secretion. Residues asparagine 185 and asparagine 225 are each glycosylated (N-linked (GlcNAc...) asparagine). Aspartate 255 functions as the Proton donor in the catalytic mechanism. Cysteine 257 and cysteine 274 are disulfide-bonded. N-linked (GlcNAc...) asparagine glycosylation is found at asparagine 263 and asparagine 275. Histidine 278 is a catalytic residue. 2 PbH1 repeats span residues isoleucine 295–alanine 316 and isoleucine 327–glutamine 348. Residues asparagine 302, asparagine 329, asparagine 354, and asparagine 366 are each glycosylated (N-linked (GlcNAc...) asparagine). A PbH1 3 repeat occupies proline 362 to asparagine 405. A disulfide bond links cysteine 392 and cysteine 398. Asparagine 436 carries an N-linked (GlcNAc...) asparagine glycan.

This sequence belongs to the glycosyl hydrolase 28 family.

It localises to the secreted. The enzyme catalyses [(1-&gt;4)-alpha-D-galacturonosyl](n) + H2O = alpha-D-galacturonate + [(1-&gt;4)-alpha-D-galacturonosyl](n-1). In terms of biological role, specific in hydrolyzing the terminal glycosidic bond of polygalacturonic acid and oligogalacturonates. This Aspergillus fumigatus (strain ATCC MYA-4609 / CBS 101355 / FGSC A1100 / Af293) (Neosartorya fumigata) protein is Probable exopolygalacturonase B (pgxB).